The sequence spans 139 residues: uncharacterized protein (139 aa).

Helical transmembrane passes span 71–91 and 97–117; these read LFSA…ATLL and ENEL…FVMV.

This sequence belongs to the RseC family.

The protein localises to the cell inner membrane. This is an uncharacterized protein from Haemophilus influenzae (strain ATCC 51907 / DSM 11121 / KW20 / Rd).